The chain runs to 89 residues: Small ribosomal subunit protein uS15 (89 aa).

Residues 1–10 (MAVTTDQKSQ) are compositionally biased toward polar residues. The disordered stretch occupies residues 1 to 22 (MAVTTDQKSQVMRDYQRAAGDT).

It belongs to the universal ribosomal protein uS15 family. Part of the 30S ribosomal subunit. Forms a bridge to the 50S subunit in the 70S ribosome, contacting the 23S rRNA.

Functionally, one of the primary rRNA binding proteins, it binds directly to 16S rRNA where it helps nucleate assembly of the platform of the 30S subunit by binding and bridging several RNA helices of the 16S rRNA. Its function is as follows. Forms an intersubunit bridge (bridge B4) with the 23S rRNA of the 50S subunit in the ribosome. In Nitrosomonas europaea (strain ATCC 19718 / CIP 103999 / KCTC 2705 / NBRC 14298), this protein is Small ribosomal subunit protein uS15.